The sequence spans 237 residues: Phosphoribosylaminoimidazole-succinocarboxamide synthase (237 aa).

Belongs to the SAICAR synthetase family.

The catalysed reaction is 5-amino-1-(5-phospho-D-ribosyl)imidazole-4-carboxylate + L-aspartate + ATP = (2S)-2-[5-amino-1-(5-phospho-beta-D-ribosyl)imidazole-4-carboxamido]succinate + ADP + phosphate + 2 H(+). It participates in purine metabolism; IMP biosynthesis via de novo pathway; 5-amino-1-(5-phospho-D-ribosyl)imidazole-4-carboxamide from 5-amino-1-(5-phospho-D-ribosyl)imidazole-4-carboxylate: step 1/2. This is Phosphoribosylaminoimidazole-succinocarboxamide synthase from Cronobacter sakazakii (strain ATCC BAA-894) (Enterobacter sakazakii).